The following is a 556-amino-acid chain: Zinc finger protein 18 (556 aa).

The 83-residue stretch at 41–123 (RQLFRQFRYQ…TLVESLKGEP (83 aa)) folds into the SCAN box domain. The disordered stretch occupies residues 169-195 (QDLPLQNSSSATGELLSHGVKEESDME). A KRAB domain is found at 218 to 291 (ELGTAVLPPL…HLHGAEKMAR (74 aa)). 5 C2H2-type zinc fingers span residues 415 to 437 (PTCRECGKTFYRNSQLVFHQRTH), 443 to 465 (FHCHICKKAFLRSSDFVKHQRTH), 471 to 493 (CKCDYCGKGFSDFSGLRHHEKIH), 499 to 521 (YKCPLCEKSFIQRSNFNRHQRVH), and 527 to 549 (YKCTHCGKQFSWSSSLDKHQRSH).

It belongs to the krueppel C2H2-type zinc-finger protein family.

The protein localises to the nucleus. Functionally, may be involved in transcriptional regulation. The protein is Zinc finger protein 18 (Znf18) of Mus musculus (Mouse).